We begin with the raw amino-acid sequence, 268 residues long: Thiazole synthase (268 aa).

The active-site Schiff-base intermediate with DXP is Lys-108. Residues Gly-169, 195-196 (AG), and 217-218 (NS) each bind 1-deoxy-D-xylulose 5-phosphate. The tract at residues 248 to 268 (RLKENPLASPSSPLEGVISNN) is disordered. A compositionally biased stretch (polar residues) spans 255-268 (ASPSSPLEGVISNN).

The protein belongs to the ThiG family. Homotetramer. Forms heterodimers with either ThiH or ThiS.

The protein localises to the cytoplasm. It carries out the reaction [ThiS sulfur-carrier protein]-C-terminal-Gly-aminoethanethioate + 2-iminoacetate + 1-deoxy-D-xylulose 5-phosphate = [ThiS sulfur-carrier protein]-C-terminal Gly-Gly + 2-[(2R,5Z)-2-carboxy-4-methylthiazol-5(2H)-ylidene]ethyl phosphate + 2 H2O + H(+). Its pathway is cofactor biosynthesis; thiamine diphosphate biosynthesis. In terms of biological role, catalyzes the rearrangement of 1-deoxy-D-xylulose 5-phosphate (DXP) to produce the thiazole phosphate moiety of thiamine. Sulfur is provided by the thiocarboxylate moiety of the carrier protein ThiS. In vitro, sulfur can be provided by H(2)S. This is Thiazole synthase from Prochlorococcus marinus (strain NATL1A).